The primary structure comprises 353 residues: MTAILERRESESLWGRFCNWITSSENRLYIGWFGVLMIPTLLTATSVFIIAFIAAPPVDIDGIREPVSGSLLYGNNIISGAIIPTSAAIGLHFYPIWEAASVDEWLYNGGPYELIVLHFLLGVACYMGREWELSFRLGMRPWIAVAYSAPVAAATAVFLIYPIGQGSFSDGMPLGISGTFNFMIVFQAEHNILMHPFHMLGVAGVFGGSLFSAMHGSLVTSSLIRETTENESANEGYRFGQEEETYNIVAAHGYFGRLIFQYASFNNSRSLHFFLAAWPVVGIWFTALGISTMAFNLNGFNFNQSVVDSQGRVINTWADIINRANLGMEVMHERNAHNFPLDLAAIEAPSTNG.

An N-acetylthreonine modification is found at Thr2. Thr2 carries the post-translational modification Phosphothreonine. 3 helical membrane passes run 29–46, 118–133, and 142–156; these read YIGW…TATS, HFLL…EWEL, and WIAV…AATA. His118 provides a ligand contact to chlorophyll a. Tyr126 provides a ligand contact to pheophytin a. The [CaMn4O5] cluster site is built by Asp170 and Glu189. The helical transmembrane segment at 197–218 threads the bilayer; that stretch reads FHMLGVAGVFGGSLFSAMHGSL. His198 contacts chlorophyll a. A quinone is bound by residues His215 and 264-265; that span reads SF. Position 215 (His215) interacts with Fe cation. Fe cation is bound at residue His272. A helical transmembrane segment spans residues 274–288; that stretch reads FLAAWPVVGIWFTAL. Residues His332, Glu333, Asp342, and Ala344 each contribute to the [CaMn4O5] cluster site. The propeptide occupies 345–353; sequence AIEAPSTNG.

This sequence belongs to the reaction center PufL/M/PsbA/D family. As to quaternary structure, PSII is composed of 1 copy each of membrane proteins PsbA, PsbB, PsbC, PsbD, PsbE, PsbF, PsbH, PsbI, PsbJ, PsbK, PsbL, PsbM, PsbT, PsbX, PsbY, PsbZ, Psb30/Ycf12, at least 3 peripheral proteins of the oxygen-evolving complex and a large number of cofactors. It forms dimeric complexes. Requires The D1/D2 heterodimer binds P680, chlorophylls that are the primary electron donor of PSII, and subsequent electron acceptors. It shares a non-heme iron and each subunit binds pheophytin, quinone, additional chlorophylls, carotenoids and lipids. D1 provides most of the ligands for the Mn4-Ca-O5 cluster of the oxygen-evolving complex (OEC). There is also a Cl(-1) ion associated with D1 and D2, which is required for oxygen evolution. The PSII complex binds additional chlorophylls, carotenoids and specific lipids. as cofactor. Post-translationally, tyr-161 forms a radical intermediate that is referred to as redox-active TyrZ, YZ or Y-Z. C-terminally processed by CTPA; processing is essential to allow assembly of the oxygen-evolving complex and thus photosynthetic growth.

Its subcellular location is the plastid. It is found in the chloroplast thylakoid membrane. It catalyses the reaction 2 a plastoquinone + 4 hnu + 2 H2O = 2 a plastoquinol + O2. Photosystem II (PSII) is a light-driven water:plastoquinone oxidoreductase that uses light energy to abstract electrons from H(2)O, generating O(2) and a proton gradient subsequently used for ATP formation. It consists of a core antenna complex that captures photons, and an electron transfer chain that converts photonic excitation into a charge separation. The D1/D2 (PsbA/PsbD) reaction center heterodimer binds P680, the primary electron donor of PSII as well as several subsequent electron acceptors. This is Photosystem II protein D1 from Petunia hybrida (Petunia).